The primary structure comprises 315 residues: MLEIEKPKIECVETSEDGNYGKFVVEPLERGYGTTLGNALRRILLSSLPGVAASHVKIDGVLHEFSTVRGVKEDVSELILNIKELALKMNGDGTKTIYIDAQGPGEVVAGDIKTDGDVEIINGELHIATLDENSRLYMEITVNGGRGYVSQRRNKFEDMPIGTIPVDSIYTPIKRVNFNVENTRVGQITDYDKLSLEVWTNGTILPDEAVSLSAKILIEHFKLFMTLTDHANNVEIMVEKEEDKKEKVLEMAIEELDLSVRSYNCLKRAGINTVQELTERTMDDMMKVRNLGKKSLEEVEQKLDTLGLSLKQNED.

The segment at 1–228 (MLEIEKPKIE…EHFKLFMTLT (228 aa)) is alpha N-terminal domain (alpha-NTD). The tract at residues 245 to 315 (KEKVLEMAIE…LGLSLKQNED (71 aa)) is alpha C-terminal domain (alpha-CTD).

This sequence belongs to the RNA polymerase alpha chain family. Homodimer. The RNAP catalytic core consists of 2 alpha, 1 beta, 1 beta' and 1 omega subunit. When a sigma factor is associated with the core the holoenzyme is formed, which can initiate transcription.

The catalysed reaction is RNA(n) + a ribonucleoside 5'-triphosphate = RNA(n+1) + diphosphate. DNA-dependent RNA polymerase catalyzes the transcription of DNA into RNA using the four ribonucleoside triphosphates as substrates. This is DNA-directed RNA polymerase subunit alpha from Clostridium kluyveri (strain NBRC 12016).